Consider the following 198-residue polypeptide: NADH-quinone oxidoreductase subunit B (198 aa).

The [4Fe-4S] cluster site is built by Cys-62, Cys-63, Cys-128, and Cys-158.

Belongs to the complex I 20 kDa subunit family. In terms of assembly, NDH-1 is composed of 14 different subunits. Subunits NuoB, C, D, E, F, and G constitute the peripheral sector of the complex. The cofactor is [4Fe-4S] cluster.

The protein resides in the cell inner membrane. It carries out the reaction a quinone + NADH + 5 H(+)(in) = a quinol + NAD(+) + 4 H(+)(out). Functionally, NDH-1 shuttles electrons from NADH, via FMN and iron-sulfur (Fe-S) centers, to quinones in the respiratory chain. The immediate electron acceptor for the enzyme in this species is believed to be a menaquinone. Couples the redox reaction to proton translocation (for every two electrons transferred, four hydrogen ions are translocated across the cytoplasmic membrane), and thus conserves the redox energy in a proton gradient. This Phocaeicola vulgatus (strain ATCC 8482 / DSM 1447 / JCM 5826 / CCUG 4940 / NBRC 14291 / NCTC 11154) (Bacteroides vulgatus) protein is NADH-quinone oxidoreductase subunit B.